A 298-amino-acid chain; its full sequence is 4-hydroxybenzoate octaprenyltransferase (298 aa).

7 helical membrane-spanning segments follow: residues 30–50 (IGTW…AEGI), 54–74 (GTLL…CVVN), 105–125 (VLFA…NLPT), 148–168 (FPQV…FMAI), 218–238 (DRLM…WVGL), 240–260 (LALG…FVFQ), and 275–295 (AFLN…LSLW).

It belongs to the UbiA prenyltransferase family. It depends on Mg(2+) as a cofactor.

The protein resides in the cell inner membrane. It carries out the reaction all-trans-octaprenyl diphosphate + 4-hydroxybenzoate = 4-hydroxy-3-(all-trans-octaprenyl)benzoate + diphosphate. Its pathway is cofactor biosynthesis; ubiquinone biosynthesis. In terms of biological role, catalyzes the prenylation of para-hydroxybenzoate (PHB) with an all-trans polyprenyl group. Mediates the second step in the final reaction sequence of ubiquinone-8 (UQ-8) biosynthesis, which is the condensation of the polyisoprenoid side chain with PHB, generating the first membrane-bound Q intermediate 3-octaprenyl-4-hydroxybenzoate. The polypeptide is 4-hydroxybenzoate octaprenyltransferase (Chromohalobacter salexigens (strain ATCC BAA-138 / DSM 3043 / CIP 106854 / NCIMB 13768 / 1H11)).